Here is a 551-residue protein sequence, read N- to C-terminus: Urocanate hydratase (551 aa).

Residues 48–49 (GG), glutamine 126, 172–174 (GMG), glutamate 192, arginine 197, 238–239 (NA), 259–263 (QTSAH), 269–270 (YI), and tyrosine 318 each bind NAD(+). Cysteine 406 is an active-site residue. Glycine 488 contacts NAD(+).

Belongs to the urocanase family. Requires NAD(+) as cofactor.

It localises to the cytoplasm. It catalyses the reaction 4-imidazolone-5-propanoate = trans-urocanate + H2O. It functions in the pathway amino-acid degradation; L-histidine degradation into L-glutamate; N-formimidoyl-L-glutamate from L-histidine: step 2/3. Catalyzes the conversion of urocanate to 4-imidazolone-5-propionate. This Symbiobacterium thermophilum (strain DSM 24528 / JCM 14929 / IAM 14863 / T) protein is Urocanate hydratase.